We begin with the raw amino-acid sequence, 654 residues long: Amyloid beta precursor like protein 1 (654 aa).

A signal peptide spans Met-1–Gly-38. The Extracellular portion of the chain corresponds to Asn-39 to Glu-584. A GFLD subdomain region spans residues Ala-50–Val-146. In terms of domain architecture, E1 spans Ala-50–Pro-212. Cystine bridges form between Cys-60–Cys-84, Cys-95–Cys-140, Cys-120–Cys-128, Cys-156–Cys-210, Cys-167–Cys-197, and Cys-181–Cys-209. The interval Glu-154–Pro-212 is cuBD subdomain. His-174 serves as a coordination point for Cu(2+). The Zn(2+) site is built by Glu-206, Cys-209, and Cys-210. The interval Ala-214 to Gly-297 is disordered. Acidic residues predominate over residues Gln-262–Glu-272. An E2 domain is found at Gly-297–Leu-488. Heparin-binding stretches follow at residues Phe-314–Leu-346 and Leu-414–Lys-445. The segment at Ala-446–Arg-463 is collagen-binding. Asn-465 carries N-linked (GlcNAc...) asparagine glycosylation. The segment at Ser-497–Gly-580 is disordered. Over residues Ser-508 to Pro-523 the composition is skewed to basic and acidic residues. The segment covering Lys-529–Ser-539 has biased composition (polar residues). Asn-555 carries an N-linked (GlcNAc...) asparagine glycan. Residue His-565 coordinates Cu(2+). Residue His-565 coordinates Zn(2+). Residues Ala-585–Leu-607 form a helical membrane-spanning segment. A Basolateral sorting signal motif is present at residues Arg-608–Gly-619. Over Arg-608 to Pro-654 the chain is Cytoplasmic. Residues Glu-636–Glu-652 form an interaction with DAB1 region. The interval His-640–Pro-654 is interaction with DAB2. Positions Asn-644–Tyr-647 match the NPXY motif; contains endocytosis signal motif.

This sequence belongs to the APP family. In terms of assembly, monomer and homodimer. Heparin binding promotes homodimerization. Binds, via its C-terminus, to the PID domain of several cytoplasmic proteins, including APBB and APBA family members, MAPK8IP1 and DAB1. Binding to Dab1 inhibits its serine phosphorylation. Interacts with CPEB1. Interacts (via NPXY motif) with DAB2 (via PID domain); the interaction is impaired by tyrosine phosphorylation of the NPXY motif. Interacts (via NPXY motif) with DAB1. Post-translationally, proteolytically cleaved by caspases during neuronal apoptosis. Cleaved, in vitro, at Asp-624 by caspase-3. In terms of processing, N- and O-glycosylated.

It localises to the cell membrane. The protein localises to the cytoplasm. In terms of biological role, may play a role in postsynaptic function. The C-terminal gamma-secretase processed fragment, ALID1, activates transcription activation through APBB1 (Fe65) binding. Couples to JIP signal transduction through C-terminal binding. May interact with cellular G-protein signaling pathways. Can regulate neurite outgrowth through binding to components of the extracellular matrix such as heparin and collagen I. Its function is as follows. The gamma-CTF peptide, C30, is a potent enhancer of neuronal apoptosis. This is Amyloid beta precursor like protein 1 (Aplp1) from Mus musculus (Mouse).